A 211-amino-acid polypeptide reads, in one-letter code: Large ribosomal subunit protein uL4 (211 aa).

The disordered stretch occupies residues 44-94 (RSGNHATKTRSEVRGGGKKPWSQKGTGHARQGSTRAPHWVGGGTVHGPQKR).

Belongs to the universal ribosomal protein uL4 family. Part of the 50S ribosomal subunit.

Its function is as follows. One of the primary rRNA binding proteins, this protein initially binds near the 5'-end of the 23S rRNA. It is important during the early stages of 50S assembly. It makes multiple contacts with different domains of the 23S rRNA in the assembled 50S subunit and ribosome. Forms part of the polypeptide exit tunnel. This is Large ribosomal subunit protein uL4 from Leptospira borgpetersenii serovar Hardjo-bovis (strain JB197).